A 353-amino-acid chain; its full sequence is Probable transport protein YPL264C (353 aa).

At 1 to 16 (MTLQRISKDYLKPNYG) the chain is on the cytoplasmic side. Residues 17–37 (LILLIVSYFFNSSMVVSTKVL) form a helical membrane-spanning segment. Residues 24–160 (YFFNSSMVVS…SFSGVVLIIR (137 aa)) form the EamA 1 domain. Over 38–51 (ENDPLETSQSRINP) the chain is Extracellular. A helical membrane pass occupies residues 52–69 (LQILLVRMSITYCCTLVY). Topologically, residues 70–94 (MHWNKQSVPDIPWGPAPCRKWLILR) are cytoplasmic. A helical membrane pass occupies residues 95 to 115 (GIMGFFGVFGMYFSLMYLSIS). D116 is a topological domain (extracellular). The chain crosses the membrane as a helical span at residues 117 to 137 (AVLITFMSPTLTIFLSFLLLG). Residues 138 to 144 (EPFSKLE) are Cytoplasmic-facing. Residues 145-165 (ALGSLISFSGVVLIIRPTFLF) form a helical membrane-spanning segment. Residues 166–188 (GEQTQGQQSPQDDIVETQNPKLR) lie on the Extracellular side of the membrane. The helical transmembrane segment at 189–209 (LIAIGVSLLGVCGLSSVYIII) threads the bilayer. Residues 200–326 (CGLSSVYIII…IVSSTIWVIN (127 aa)) form the EamA 2 domain. Topologically, residues 210–218 (RYIGNKAHA) are cytoplasmic. The helical transmembrane segment at 219–239 (IMSVSYFSLVTTVVAALGVLL) threads the bilayer. The Extracellular portion of the chain corresponds to 240–254 (IPSMSLQLPHSWKQW). The chain crosses the membrane as a helical span at residues 255 to 275 (GLFLNLGISGFIHQILLTMGI). The Cytoplasmic portion of the chain corresponds to 276–282 (QRERAGR). Residues 283-303 (GSLMTYTQVIYAVFWDVVLFH) traverse the membrane as a helical segment. Residue H304 is a topological domain, extracellular. The helical transmembrane segment at 305–325 (WPNIWTWCGMAVIVSSTIWVI) threads the bilayer. Residues 326–353 (NMRASKQNVVATAELLSTSDFELDDLED) are Cytoplasmic-facing.

The protein localises to the membrane. The chain is Probable transport protein YPL264C from Saccharomyces cerevisiae (strain ATCC 204508 / S288c) (Baker's yeast).